Reading from the N-terminus, the 393-residue chain is Phosphoglycerate kinase (393 aa).

Residues 21 to 23 (DLN), Arg-36, 59 to 62 (HLGR), Arg-113, and Arg-146 contribute to the substrate site. ATP contacts are provided by residues Lys-197, Glu-319, and 345–348 (GGDT).

The protein belongs to the phosphoglycerate kinase family. In terms of assembly, monomer.

It localises to the cytoplasm. It carries out the reaction (2R)-3-phosphoglycerate + ATP = (2R)-3-phospho-glyceroyl phosphate + ADP. Its pathway is carbohydrate degradation; glycolysis; pyruvate from D-glyceraldehyde 3-phosphate: step 2/5. This chain is Phosphoglycerate kinase, found in Nitratidesulfovibrio vulgaris (strain DSM 19637 / Miyazaki F) (Desulfovibrio vulgaris).